The primary structure comprises 85 residues: Toxin Cll5c* (85 aa).

Positions 1-17 are cleaved as a signal peptide; the sequence is MNSLLIITACLVLFVWA. Positions 18–83 constitute an LCN-type CS-alpha/beta domain; it reads KEGYLVNKST…TYPLPNKSCS (66 aa). Intrachain disulfides connect C29–C82, C33–C58, C42–C63, and C46–C65. Residues 84–85 constitute a propeptide, removed by a carboxypeptidase; the sequence is KK.

It belongs to the long (4 C-C) scorpion toxin superfamily. Sodium channel inhibitor family. Beta subfamily. As to expression, expressed by the venom gland.

Its subcellular location is the secreted. Its function is as follows. Beta toxins bind voltage-independently at site-4 of sodium channels (Nav) and shift the voltage of activation toward more negative potentials thereby affecting sodium channel activation and promoting spontaneous and repetitive firing. The polypeptide is Toxin Cll5c* (Centruroides limpidus (Mexican scorpion)).